We begin with the raw amino-acid sequence, 194 residues long: Threonylcarbamoyl-AMP synthase (194 aa).

Residues 11 to 194 enclose the YrdC-like domain; that stretch reads FRNLMKIINA…GINYKIIRKG (184 aa).

The protein belongs to the SUA5 family. TsaC subfamily.

It localises to the cytoplasm. The catalysed reaction is L-threonine + hydrogencarbonate + ATP = L-threonylcarbamoyladenylate + diphosphate + H2O. Functionally, required for the formation of a threonylcarbamoyl group on adenosine at position 37 (t(6)A37) in tRNAs that read codons beginning with adenine. Catalyzes the conversion of L-threonine, HCO(3)(-)/CO(2) and ATP to give threonylcarbamoyl-AMP (TC-AMP) as the acyladenylate intermediate, with the release of diphosphate. This Wigglesworthia glossinidia brevipalpis protein is Threonylcarbamoyl-AMP synthase.